The primary structure comprises 430 residues: Enolase (430 aa).

Residue glutamine 163 coordinates (2R)-2-phosphoglycerate. Glutamate 205 acts as the Proton donor in catalysis. Residues aspartate 242, glutamate 287, and aspartate 314 each contribute to the Mg(2+) site. (2R)-2-phosphoglycerate-binding residues include lysine 339, arginine 368, serine 369, and lysine 390. The Proton acceptor role is filled by lysine 339.

It belongs to the enolase family. The cofactor is Mg(2+).

Its subcellular location is the cytoplasm. It is found in the secreted. The protein resides in the cell surface. It carries out the reaction (2R)-2-phosphoglycerate = phosphoenolpyruvate + H2O. It participates in carbohydrate degradation; glycolysis; pyruvate from D-glyceraldehyde 3-phosphate: step 4/5. Functionally, catalyzes the reversible conversion of 2-phosphoglycerate (2-PG) into phosphoenolpyruvate (PEP). It is essential for the degradation of carbohydrates via glycolysis. This Geobacillus sp. (strain WCH70) protein is Enolase.